The chain runs to 305 residues: MKKIIFMGTPSYATCILKALVENENFKLVALFTQPDKAVGRKQILTPSDTKAFLSQNYPSIPIFTPSSLKDENIMRQIKDLNPDFIVVAAYGKILPKAILDLAPCVNLHASLLPKYRGASPIQSAILNKDEKSGVCTMLMEEGLDTGAILESLECDIKDKNSSEVFELLANLAAKLILSTLLNFDKITPKKQEESLATLCRKIKKEDGLINLQNARELYQKYLAFTPWPGVFLENGLKFLELELVDELKQNAKMGEILELEKESFLLACKQGVLRIKKLQESGKKALDGRTYLNGKRLKSEDSLC.

111 to 114 (SLLP) provides a ligand contact to (6S)-5,6,7,8-tetrahydrofolate.

The protein belongs to the Fmt family.

It carries out the reaction L-methionyl-tRNA(fMet) + (6R)-10-formyltetrahydrofolate = N-formyl-L-methionyl-tRNA(fMet) + (6S)-5,6,7,8-tetrahydrofolate + H(+). Its function is as follows. Attaches a formyl group to the free amino group of methionyl-tRNA(fMet). The formyl group appears to play a dual role in the initiator identity of N-formylmethionyl-tRNA by promoting its recognition by IF2 and preventing the misappropriation of this tRNA by the elongation apparatus. The protein is Methionyl-tRNA formyltransferase of Campylobacter jejuni subsp. doylei (strain ATCC BAA-1458 / RM4099 / 269.97).